A 382-amino-acid chain; its full sequence is Mannitol-1-phosphate 5-dehydrogenase (382 aa).

3 to 14 (ALHFGAGNIGRG) contributes to the NAD(+) binding site. Lys269 carries the N6-acetyllysine modification.

It belongs to the mannitol dehydrogenase family.

It carries out the reaction D-mannitol 1-phosphate + NAD(+) = beta-D-fructose 6-phosphate + NADH + H(+). The chain is Mannitol-1-phosphate 5-dehydrogenase from Escherichia coli O81 (strain ED1a).